The sequence spans 388 residues: Arginine biosynthesis bifunctional protein ArgJ 2 (388 aa).

5 residues coordinate substrate: T145, K167, T178, E257, and N381. T178 (nucleophile) is an active-site residue.

It belongs to the ArgJ family. In terms of assembly, heterotetramer of two alpha and two beta chains.

The protein resides in the cytoplasm. It catalyses the reaction N(2)-acetyl-L-ornithine + L-glutamate = N-acetyl-L-glutamate + L-ornithine. The catalysed reaction is L-glutamate + acetyl-CoA = N-acetyl-L-glutamate + CoA + H(+). Its pathway is amino-acid biosynthesis; L-arginine biosynthesis; L-ornithine and N-acetyl-L-glutamate from L-glutamate and N(2)-acetyl-L-ornithine (cyclic): step 1/1. It functions in the pathway amino-acid biosynthesis; L-arginine biosynthesis; N(2)-acetyl-L-ornithine from L-glutamate: step 1/4. Functionally, catalyzes two activities which are involved in the cyclic version of arginine biosynthesis: the synthesis of N-acetylglutamate from glutamate and acetyl-CoA as the acetyl donor, and of ornithine by transacetylation between N(2)-acetylornithine and glutamate. The protein is Arginine biosynthesis bifunctional protein ArgJ 2 of Clostridium acetobutylicum (strain ATCC 824 / DSM 792 / JCM 1419 / IAM 19013 / LMG 5710 / NBRC 13948 / NRRL B-527 / VKM B-1787 / 2291 / W).